The chain runs to 201 residues: MSYVPIVIEQTSRGERAYDIYSRLLKERIIFVCSTVEDHMANLIVAQLLFLEAENPKKDIYMYINSPGGVVTAGLAIYDTMQYIKPKVATLCIGQACSMGSFLLCGGEKGMRYSLPHSRIMIHQPSGGYQGQATDIEIHAQETLKIKRLLNELYSKHTGQDVKHIEKSMERDNFMSPEEAKKFGIVDNIISSRNATGLLTK.

Ser-98 acts as the Nucleophile in catalysis. The active site involves His-123.

It belongs to the peptidase S14 family. In terms of assembly, fourteen ClpP subunits assemble into 2 heptameric rings which stack back to back to give a disk-like structure with a central cavity, resembling the structure of eukaryotic proteasomes.

It is found in the cytoplasm. The catalysed reaction is Hydrolysis of proteins to small peptides in the presence of ATP and magnesium. alpha-casein is the usual test substrate. In the absence of ATP, only oligopeptides shorter than five residues are hydrolyzed (such as succinyl-Leu-Tyr-|-NHMec, and Leu-Tyr-Leu-|-Tyr-Trp, in which cleavage of the -Tyr-|-Leu- and -Tyr-|-Trp bonds also occurs).. Cleaves peptides in various proteins in a process that requires ATP hydrolysis. Has a chymotrypsin-like activity. Plays a major role in the degradation of misfolded proteins. In Rickettsia canadensis (strain McKiel), this protein is ATP-dependent Clp protease proteolytic subunit.